Here is a 140-residue protein sequence, read N- to C-terminus: N14 matrix protein (140 aa).

The signal sequence occupies residues 1–25 (MACTLRLTIAALVLLGICHLSRPVA).

It belongs to the N16 matrix protein family. Heterooligomer; disulfide-linked. Pif97, Pif80, N16 and other proteins form a complex. In terms of tissue distribution, component of conchiolin, the organic matrix of nacre. Only expressed in the dorsal region of the mantle.

Its subcellular location is the secreted. It localises to the extracellular space. The protein localises to the extracellular matrix. In terms of biological role, may be specifically involved in the formation of the nacreous layer. The protein is N14 matrix protein of Pinctada maxima (Silver-lipped pearl oyster).